Here is a 101-residue protein sequence, read N- to C-terminus: Small ribosomal subunit protein uS14 (101 aa).

This sequence belongs to the universal ribosomal protein uS14 family. As to quaternary structure, part of the 30S ribosomal subunit. Contacts proteins S3 and S10.

Binds 16S rRNA, required for the assembly of 30S particles and may also be responsible for determining the conformation of the 16S rRNA at the A site. In Pelagibacter ubique (strain HTCC1062), this protein is Small ribosomal subunit protein uS14.